Consider the following 182-residue polypeptide: Regulatory protein RecX (182 aa).

A disordered region spans residues 12–54 (LSQRDHSESELRRKLAAPPFSAKGNWGKRSGAKSSNLVESNPV). Residues 13–24 (SQRDHSESELRR) show a composition bias toward basic and acidic residues. Positions 43–54 (AKSSNLVESNPV) are enriched in polar residues.

The protein belongs to the RecX family.

It is found in the cytoplasm. In terms of biological role, modulates RecA activity. The polypeptide is Regulatory protein RecX (Yersinia pseudotuberculosis serotype I (strain IP32953)).